Reading from the N-terminus, the 145-residue chain is HTH-type transcriptional regulator MhqR (145 aa).

Residues 5 to 137 (SLKLFIVLSR…CTEMLKRVGL (133 aa)) form the HTH marR-type domain. The segment at residues 51–74 (LQQIGDKILLASGSITYVVDKLEQ) is a DNA-binding region (H-T-H motif).

Negatively regulates mhqA, mhqED, mhqNOP, and azoR2 which may contribute to the degradation of aromatic compounds. The protein is HTH-type transcriptional regulator MhqR (mhqR) of Bacillus subtilis (strain 168).